A 196-amino-acid chain; its full sequence is Adenylyl-sulfate kinase (196 aa).

31–38 (GLSGAGKS) serves as a coordination point for ATP. The Phosphoserine intermediate role is filled by Ser105.

Belongs to the APS kinase family.

The enzyme catalyses adenosine 5'-phosphosulfate + ATP = 3'-phosphoadenylyl sulfate + ADP + H(+). Its pathway is sulfur metabolism; hydrogen sulfide biosynthesis; sulfite from sulfate: step 2/3. In terms of biological role, catalyzes the synthesis of activated sulfate. This Pseudomonas aeruginosa (strain ATCC 15692 / DSM 22644 / CIP 104116 / JCM 14847 / LMG 12228 / 1C / PRS 101 / PAO1) protein is Adenylyl-sulfate kinase (cysC).